The following is a 350-amino-acid chain: Spermidine/putrescine import ATP-binding protein PotA (350 aa).

The ABC transporter domain occupies L6–I236. G38 to T45 lines the ATP pocket.

The protein belongs to the ABC transporter superfamily. Spermidine/putrescine importer (TC 3.A.1.11.1) family. The complex is composed of two ATP-binding proteins (PotA), two transmembrane proteins (PotB and PotC) and a solute-binding protein (PotD).

It localises to the cell membrane. It catalyses the reaction ATP + H2O + polyamine-[polyamine-binding protein]Side 1 = ADP + phosphate + polyamineSide 2 + [polyamine-binding protein]Side 1.. Functionally, part of the ABC transporter complex PotABCD involved in spermidine/putrescine import. Responsible for energy coupling to the transport system. The protein is Spermidine/putrescine import ATP-binding protein PotA of Spiroplasma citri.